The chain runs to 212 residues: ATP-dependent dethiobiotin synthetase BioD (212 aa).

13–18 (GIGKTV) contacts ATP. A Mg(2+)-binding site is contributed by Thr-17. Residue Lys-33 is part of the active site. Ser-37 is a substrate binding site. Residue Glu-100 coordinates Mg(2+). ATP is bound by residues 100–103 (EGAG) and 184–186 (PLL).

Belongs to the dethiobiotin synthetase family. Homodimer. It depends on Mg(2+) as a cofactor.

It is found in the cytoplasm. The catalysed reaction is (7R,8S)-7,8-diammoniononanoate + CO2 + ATP = (4R,5S)-dethiobiotin + ADP + phosphate + 3 H(+). Its pathway is cofactor biosynthesis; biotin biosynthesis; biotin from 7,8-diaminononanoate: step 1/2. Its function is as follows. Catalyzes a mechanistically unusual reaction, the ATP-dependent insertion of CO2 between the N7 and N8 nitrogen atoms of 7,8-diaminopelargonic acid (DAPA, also called 7,8-diammoniononanoate) to form a ureido ring. In Brucella melitensis biotype 2 (strain ATCC 23457), this protein is ATP-dependent dethiobiotin synthetase BioD.